The chain runs to 99 residues: 10 kDa heat shock protein, mitochondrial (99 aa).

Belongs to the GroES chaperonin family. As to quaternary structure, homoheptamer arranged in a ring structure. 2 heptameric Hsp10 rings interact with a Hsp60 tetradecamer in the structure of a back-to-back double heptameric ring to form the symmetrical football complex.

It is found in the mitochondrion matrix. In terms of biological role, co-chaperonin implicated in mitochondrial protein import and macromolecular assembly. Together with Hsp60, facilitates the correct folding of imported proteins. May also prevent misfolding and promote the refolding and proper assembly of unfolded polypeptides generated under stress conditions in the mitochondrial matrix. The functional units of these chaperonins consist of heptameric rings of the large subunit Hsp60, which function as a back-to-back double ring. In a cyclic reaction, Hsp60 ring complexes bind one unfolded substrate protein per ring, followed by the binding of ATP and association with 2 heptameric rings of the co-chaperonin Hsp10. This leads to sequestration of the substrate protein in the inner cavity of Hsp60 where, for a certain period of time, it can fold undisturbed by other cell components. Synchronous hydrolysis of ATP in all Hsp60 subunits results in the dissociation of the chaperonin rings and the release of ADP and the folded substrate protein. The polypeptide is 10 kDa heat shock protein, mitochondrial (hspe1) (Oryzias latipes (Japanese rice fish)).